We begin with the raw amino-acid sequence, 205 residues long: GTP cyclohydrolase-2 (205 aa).

R49–E53 provides a ligand contact to GTP. The Zn(2+) site is built by C54, C65, and C67. GTP-binding positions include Q70, E92–R94, and T114. The active-site Proton acceptor is the D126. Catalysis depends on R128, which acts as the Nucleophile. T149 and K154 together coordinate GTP.

It belongs to the GTP cyclohydrolase II family. The cofactor is Zn(2+).

The enzyme catalyses GTP + 4 H2O = 2,5-diamino-6-hydroxy-4-(5-phosphoribosylamino)-pyrimidine + formate + 2 phosphate + 3 H(+). The protein operates within cofactor biosynthesis; riboflavin biosynthesis; 5-amino-6-(D-ribitylamino)uracil from GTP: step 1/4. In terms of biological role, catalyzes the conversion of GTP to 2,5-diamino-6-ribosylamino-4(3H)-pyrimidinone 5'-phosphate (DARP), formate and pyrophosphate. The polypeptide is GTP cyclohydrolase-2 (Shewanella woodyi (strain ATCC 51908 / MS32)).